We begin with the raw amino-acid sequence, 202 residues long: LexA repressor (202 aa).

Residues 28-48 constitute a DNA-binding region (H-T-H motif); it reads RAEIAQELGFKSPNAAEEHLK. Active-site for autocatalytic cleavage activity residues include S123 and K160.

This sequence belongs to the peptidase S24 family. In terms of assembly, homodimer.

It catalyses the reaction Hydrolysis of Ala-|-Gly bond in repressor LexA.. In terms of biological role, represses a number of genes involved in the response to DNA damage (SOS response), including recA and lexA. In the presence of single-stranded DNA, RecA interacts with LexA causing an autocatalytic cleavage which disrupts the DNA-binding part of LexA, leading to derepression of the SOS regulon and eventually DNA repair. This is LexA repressor from Pseudomonas chlororaphis (Pseudomonas aureofaciens).